A 277-amino-acid polypeptide reads, in one-letter code: MQQDSHTHGIDMSALGRNKQSLRMAEETVAIEVPGLSLFYGDKQALFDVQMNIPKQRVTAFIGPSGCGKSTLLRTFNRMNDLVDGCRVEGAINLYGNNIYRKGEDVAELRRRVGMVFQKPNPFPKTIYENVVYGLRIQGINKKRVLDEAVEWALKGAALWDEVKDRLHESALGLSGGQQQRLVIARTIAVEPEVLLLDEPCSALDPISTLKVEELIYELKSKYTIVIVTHNMQQAARVSDYTAFMYMGKLVEFGDTDTLFTNPAKKQTEDYITGRYG.

In terms of domain architecture, ABC transporter spans 31–272 (IEVPGLSLFY…PAKKQTEDYI (242 aa)). Residue 63 to 70 (GPSGCGKS) coordinates ATP.

Belongs to the ABC transporter superfamily. Phosphate importer (TC 3.A.1.7) family. In terms of assembly, the complex is composed of two ATP-binding proteins (PstB), two transmembrane proteins (PstC and PstA) and a solute-binding protein (PstS).

Its subcellular location is the cell inner membrane. It catalyses the reaction phosphate(out) + ATP + H2O = ADP + 2 phosphate(in) + H(+). Functionally, part of the ABC transporter complex PstSACB involved in phosphate import. Responsible for energy coupling to the transport system. This is Phosphate import ATP-binding protein PstB 2 from Pseudomonas putida (strain ATCC 47054 / DSM 6125 / CFBP 8728 / NCIMB 11950 / KT2440).